Reading from the N-terminus, the 256-residue chain is MAPGKKVAPAPFGAKSTKSNKAKNPLTHSTPKNFGIGQAVQPKRNLSRYVKWPEYVRLQRQKKILSIRLKVPPTIAQFQYTLDRNTAAETFKLFNKYRPETAAEKKERLTKEAAAIAEGKSKQDASPKPYAVKYGLNHVVSLIENKKAKLVLIANDVDPIELVVFLPALCKKMGVPYAIIKGKARLGTLVNQKTSAVAALTEVRAEDEAALAKLVSTIDANFADKYDEVKKHWGGGILGNKAQAKMDKRAKTSDSA.

The tract at residues 1–37 is disordered; that stretch reads MAPGKKVAPAPFGAKSTKSNKAKNPLTHSTPKNFGIG.

It belongs to the eukaryotic ribosomal protein eL8 family. As to quaternary structure, component of the large ribosomal subunit (LSU). Mature yeast ribosomes consist of a small (40S) and a large (60S) subunit. The 40S small subunit contains 1 molecule of ribosomal RNA (18S rRNA) and 33 different proteins (encoded by 57 genes). The large 60S subunit contains 3 rRNA molecules (25S, 5.8S and 5S rRNA) and 46 different proteins (encoded by 81 genes).

The protein resides in the cytoplasm. Functionally, component of the ribosome, a large ribonucleoprotein complex responsible for the synthesis of proteins in the cell. The small ribosomal subunit (SSU) binds messenger RNAs (mRNAs) and translates the encoded message by selecting cognate aminoacyl-transfer RNA (tRNA) molecules. The large subunit (LSU) contains the ribosomal catalytic site termed the peptidyl transferase center (PTC), which catalyzes the formation of peptide bonds, thereby polymerizing the amino acids delivered by tRNAs into a polypeptide chain. The nascent polypeptides leave the ribosome through a tunnel in the LSU and interact with protein factors that function in enzymatic processing, targeting, and the membrane insertion of nascent chains at the exit of the ribosomal tunnel. This is Large ribosomal subunit protein eL8B from Saccharomyces cerevisiae (strain ATCC 204508 / S288c) (Baker's yeast).